We begin with the raw amino-acid sequence, 207 residues long: Vascular endothelial growth factor B (207 aa).

Positions 1–21 (MSPLLRRLLLVALLQLACTQA) are cleaved as a signal peptide. 2 disulfides stabilise this stretch: cysteine 78/cysteine 122 and cysteine 82/cysteine 124. Residues 140–182 (IPHHRPQPRSVLSWDSAPGASSPADIIHPTPAPGPSAHAAPSA) form a disordered region.

It belongs to the PDGF/VEGF growth factor family. In terms of assembly, homodimer; disulfide-linked. Can also form heterodimer with VEGF.

Its subcellular location is the secreted. Growth factor for endothelial cells. VEGF-B167 binds heparin and neuropilin-1 whereas the binding to neuropilin-1 of VEGF-B186 is regulated by proteolysis. The polypeptide is Vascular endothelial growth factor B (Vegfb) (Rattus norvegicus (Rat)).